The primary structure comprises 219 residues: 2-hydroxy-3-keto-5-methylthiopentenyl-1-phosphate phosphatase (219 aa).

Belongs to the HAD-like hydrolase superfamily. MtnX family.

The enzyme catalyses 2-hydroxy-5-methylsulfanyl-3-oxopent-1-enyl phosphate + H2O = 1,2-dihydroxy-5-(methylsulfanyl)pent-1-en-3-one + phosphate. Its pathway is amino-acid biosynthesis; L-methionine biosynthesis via salvage pathway; L-methionine from S-methyl-5-thio-alpha-D-ribose 1-phosphate: step 4/6. Its function is as follows. Dephosphorylates 2-hydroxy-3-keto-5-methylthiopentenyl-1-phosphate (HK-MTPenyl-1-P) yielding 1,2-dihydroxy-3-keto-5-methylthiopentene (DHK-MTPene). This chain is 2-hydroxy-3-keto-5-methylthiopentenyl-1-phosphate phosphatase, found in Bacillus thuringiensis subsp. konkukian (strain 97-27).